A 1113-amino-acid chain; its full sequence is Coiled-coil domain-containing protein 158 (1113 aa).

Positions 1–14 are enriched in polar residues; the sequence is MESKAWESNNEDLL. The interval 1-26 is disordered; that stretch reads MESKAWESNNEDLLSSSGVTSNGGSS. The span at 15 to 26 shows a compositional bias: low complexity; the sequence is SSSGVTSNGGSS. Coiled-coil stretches lie at residues 72 to 183 and 243 to 833; these read GKEH…LSHE and VEDQ…QEQE. 2 disordered regions span residues 848 to 902 and 955 to 1062; these read LQGP…DPTR and CHRS…IETT. Polar residues-rich tracts occupy residues 867-894, 955-974, 994-1017, 1024-1040, and 1053-1062; these read ASVT…TKAN, CHRS…SSET, FTFT…SSPK, LLTS…SQYR, and DSQSPPIETT. Residues 1061–1113 are a coiled coil; that stretch reads TTGKTCRKLQNRLESLQTLVEDLQLKNQAMSSMIRNQEKRIQKVKDQEKMLLK.

The chain is Coiled-coil domain-containing protein 158 (CCDC158) from Homo sapiens (Human).